We begin with the raw amino-acid sequence, 807 residues long: Probable E3 ubiquitin-protein ligase mug30 (807 aa).

Residues 453 to 807 enclose the HECT domain; the sequence is RNKDFRKALK…LLETNGFNIR (355 aa). The Glycyl thioester intermediate role is filled by C775.

Its subcellular location is the cytoplasm. The protein localises to the cytoskeleton. It localises to the microtubule organizing center. The protein resides in the spindle pole body. It carries out the reaction S-ubiquitinyl-[E2 ubiquitin-conjugating enzyme]-L-cysteine + [acceptor protein]-L-lysine = [E2 ubiquitin-conjugating enzyme]-L-cysteine + N(6)-ubiquitinyl-[acceptor protein]-L-lysine.. It functions in the pathway protein modification; protein ubiquitination. Probable E3 ubiquitin-protein ligase. Has a role in meiosis. This is Probable E3 ubiquitin-protein ligase mug30 (mug30) from Schizosaccharomyces pombe (strain 972 / ATCC 24843) (Fission yeast).